We begin with the raw amino-acid sequence, 302 residues long: Recombination-associated protein RdgC (302 aa).

The protein belongs to the RdgC family.

It is found in the cytoplasm. The protein localises to the nucleoid. Its function is as follows. May be involved in recombination. This chain is Recombination-associated protein RdgC, found in Halorhodospira halophila (strain DSM 244 / SL1) (Ectothiorhodospira halophila (strain DSM 244 / SL1)).